Consider the following 510-residue polypeptide: Maturase K (510 aa).

The protein belongs to the intron maturase 2 family. MatK subfamily.

The protein localises to the plastid. Its subcellular location is the chloroplast. Its function is as follows. Usually encoded in the trnK tRNA gene intron. Probably assists in splicing its own and other chloroplast group II introns. The polypeptide is Maturase K (Populus nigra (Lombardy poplar)).